Reading from the N-terminus, the 540-residue chain is Chaperonin GroEL (540 aa).

ATP is bound by residues 29–32 (TLGP), 86–90 (DGTTT), Gly-413, 476–478 (NAA), and Asp-492.

The protein belongs to the chaperonin (HSP60) family. In terms of assembly, forms a cylinder of 14 subunits composed of two heptameric rings stacked back-to-back. Interacts with the co-chaperonin GroES.

The protein resides in the cytoplasm. The catalysed reaction is ATP + H2O + a folded polypeptide = ADP + phosphate + an unfolded polypeptide.. Functionally, together with its co-chaperonin GroES, plays an essential role in assisting protein folding. The GroEL-GroES system forms a nano-cage that allows encapsulation of the non-native substrate proteins and provides a physical environment optimized to promote and accelerate protein folding. In Streptococcus pneumoniae (strain Hungary19A-6), this protein is Chaperonin GroEL.